The primary structure comprises 277 residues: 4-hydroxy-3-methylbut-2-enyl diphosphate reductase (277 aa).

Position 12 (C12) interacts with [4Fe-4S] cluster. The (2E)-4-hydroxy-3-methylbut-2-enyl diphosphate site is built by H36 and H70. Residues H36 and H70 each contribute to the dimethylallyl diphosphate site. Positions 36 and 70 each coordinate isopentenyl diphosphate. C92 is a binding site for [4Fe-4S] cluster. Position 120 (H120) interacts with (2E)-4-hydroxy-3-methylbut-2-enyl diphosphate. H120 is a binding site for dimethylallyl diphosphate. H120 is an isopentenyl diphosphate binding site. E122 serves as the catalytic Proton donor. Residue T160 coordinates (2E)-4-hydroxy-3-methylbut-2-enyl diphosphate. Residue C188 coordinates [4Fe-4S] cluster. Residues S216, S217, N218, and S260 each coordinate (2E)-4-hydroxy-3-methylbut-2-enyl diphosphate. The dimethylallyl diphosphate site is built by S216, S217, N218, and S260. 4 residues coordinate isopentenyl diphosphate: S216, S217, N218, and S260.

It belongs to the IspH family. The cofactor is [4Fe-4S] cluster.

The catalysed reaction is isopentenyl diphosphate + 2 oxidized [2Fe-2S]-[ferredoxin] + H2O = (2E)-4-hydroxy-3-methylbut-2-enyl diphosphate + 2 reduced [2Fe-2S]-[ferredoxin] + 2 H(+). The enzyme catalyses dimethylallyl diphosphate + 2 oxidized [2Fe-2S]-[ferredoxin] + H2O = (2E)-4-hydroxy-3-methylbut-2-enyl diphosphate + 2 reduced [2Fe-2S]-[ferredoxin] + 2 H(+). The protein operates within isoprenoid biosynthesis; dimethylallyl diphosphate biosynthesis; dimethylallyl diphosphate from (2E)-4-hydroxy-3-methylbutenyl diphosphate: step 1/1. It participates in isoprenoid biosynthesis; isopentenyl diphosphate biosynthesis via DXP pathway; isopentenyl diphosphate from 1-deoxy-D-xylulose 5-phosphate: step 6/6. In terms of biological role, catalyzes the conversion of 1-hydroxy-2-methyl-2-(E)-butenyl 4-diphosphate (HMBPP) into a mixture of isopentenyl diphosphate (IPP) and dimethylallyl diphosphate (DMAPP). Acts in the terminal step of the DOXP/MEP pathway for isoprenoid precursor biosynthesis. The protein is 4-hydroxy-3-methylbut-2-enyl diphosphate reductase of Sulfurovum sp. (strain NBC37-1).